A 416-amino-acid polypeptide reads, in one-letter code: Phosphatidylinositol 5-phosphate 4-kinase type-2 gamma (416 aa).

Positions 38-415 (ASDPMLSVFM…RFREFISNIF (378 aa)) constitute a PIPK domain.

Phosphorylated, phosphorylation is induced by EGF.

The protein localises to the endoplasmic reticulum. It is found in the cytoplasm. The catalysed reaction is a 1,2-diacyl-sn-glycero-3-phospho-(1D-myo-inositol-5-phosphate) + ATP = a 1,2-diacyl-sn-glycero-3-phospho-(1D-myo-inositol-4,5-bisphosphate) + ADP + H(+). It catalyses the reaction 1,2-dihexadecanoyl-sn-glycero-3-phospho-(1D-myo-inositol-5-phosphate) + ATP = 1,2-dihexadecanoyl-sn-glycero-3-phospho-(1D-myo-inositol-4,5-bisphosphate) + ADP + H(+). The enzyme catalyses 1,2-dihexadecanoyl-sn-glycero-3-phospho-(1D-myo-inositol-5-phosphate) + GTP = 1,2-dihexadecanoyl-sn-glycero-3-phospho-(1D-myo-inositol-4,5-bisphosphate) + GDP + H(+). Its function is as follows. Phosphatidylinositol 5-phosphate 4-kinase with low enzymatic activity. May be a GTP sensor, has higher GTP-dependent kinase activity than ATP-dependent kinase activity. In Danio rerio (Zebrafish), this protein is Phosphatidylinositol 5-phosphate 4-kinase type-2 gamma (pip4k2c).